A 957-amino-acid polypeptide reads, in one-letter code: Glycine dehydrogenase (decarboxylating) (957 aa).

Position 708 is an N6-(pyridoxal phosphate)lysine (Lys-708).

This sequence belongs to the GcvP family. In terms of assembly, the glycine cleavage system is composed of four proteins: P, T, L and H. It depends on pyridoxal 5'-phosphate as a cofactor.

The catalysed reaction is N(6)-[(R)-lipoyl]-L-lysyl-[glycine-cleavage complex H protein] + glycine + H(+) = N(6)-[(R)-S(8)-aminomethyldihydrolipoyl]-L-lysyl-[glycine-cleavage complex H protein] + CO2. Its function is as follows. The glycine cleavage system catalyzes the degradation of glycine. The P protein binds the alpha-amino group of glycine through its pyridoxal phosphate cofactor; CO(2) is released and the remaining methylamine moiety is then transferred to the lipoamide cofactor of the H protein. The chain is Glycine dehydrogenase (decarboxylating) from Shigella dysenteriae serotype 1 (strain Sd197).